The following is a 207-amino-acid chain: Holliday junction branch migration complex subunit RuvA (207 aa).

A domain I region spans residues Met1–Ser71. The domain II stretch occupies residues Thr72–Glu149. The flexible linker stretch occupies residues Val150–Glu155. The tract at residues Val156–Lys207 is domain III.

This sequence belongs to the RuvA family. As to quaternary structure, homotetramer. Forms an RuvA(8)-RuvB(12)-Holliday junction (HJ) complex. HJ DNA is sandwiched between 2 RuvA tetramers; dsDNA enters through RuvA and exits via RuvB. An RuvB hexamer assembles on each DNA strand where it exits the tetramer. Each RuvB hexamer is contacted by two RuvA subunits (via domain III) on 2 adjacent RuvB subunits; this complex drives branch migration. In the full resolvosome a probable DNA-RuvA(4)-RuvB(12)-RuvC(2) complex forms which resolves the HJ.

It localises to the cytoplasm. Its function is as follows. The RuvA-RuvB-RuvC complex processes Holliday junction (HJ) DNA during genetic recombination and DNA repair, while the RuvA-RuvB complex plays an important role in the rescue of blocked DNA replication forks via replication fork reversal (RFR). RuvA specifically binds to HJ cruciform DNA, conferring on it an open structure. The RuvB hexamer acts as an ATP-dependent pump, pulling dsDNA into and through the RuvAB complex. HJ branch migration allows RuvC to scan DNA until it finds its consensus sequence, where it cleaves and resolves the cruciform DNA. The protein is Holliday junction branch migration complex subunit RuvA of Rhodopirellula baltica (strain DSM 10527 / NCIMB 13988 / SH1).